Reading from the N-terminus, the 448-residue chain is tRNA modification GTPase MnmE (448 aa).

Residues Arg-24, Glu-81, and Lys-120 each coordinate (6S)-5-formyl-5,6,7,8-tetrahydrofolate. The TrmE-type G domain occupies 216 to 373 (GLNVVLVGAP…LKRTLLREAG (158 aa)). Asn-226 contributes to the K(+) binding site. GTP is bound by residues 226–231 (NVGKSS), 245–251 (TDIAGTT), and 270–273 (DTAG). Ser-230 lines the Mg(2+) pocket. Positions 245, 247, and 250 each coordinate K(+). Thr-251 contributes to the Mg(2+) binding site. Position 448 (Lys-448) interacts with (6S)-5-formyl-5,6,7,8-tetrahydrofolate.

It belongs to the TRAFAC class TrmE-Era-EngA-EngB-Septin-like GTPase superfamily. TrmE GTPase family. As to quaternary structure, homodimer. Heterotetramer of two MnmE and two MnmG subunits. It depends on K(+) as a cofactor.

It is found in the cytoplasm. Exhibits a very high intrinsic GTPase hydrolysis rate. Involved in the addition of a carboxymethylaminomethyl (cmnm) group at the wobble position (U34) of certain tRNAs, forming tRNA-cmnm(5)s(2)U34. This Neisseria meningitidis serogroup A / serotype 4A (strain DSM 15465 / Z2491) protein is tRNA modification GTPase MnmE.